A 428-amino-acid chain; its full sequence is 3-phosphoshikimate 1-carboxyvinyltransferase (428 aa).

3-phosphoshikimate-binding residues include Lys21, Ser22, and Arg26. Lys21 serves as a coordination point for phosphoenolpyruvate. Phosphoenolpyruvate is bound by residues Gly91 and Arg119. 4 residues coordinate 3-phosphoshikimate: Ser164, Gln166, Asp313, and Lys340. A phosphoenolpyruvate-binding site is contributed by Gln166. The active-site Proton acceptor is Asp313. Residues Arg344 and Arg386 each contribute to the phosphoenolpyruvate site.

Belongs to the EPSP synthase family. In terms of assembly, monomer.

It is found in the cytoplasm. It catalyses the reaction 3-phosphoshikimate + phosphoenolpyruvate = 5-O-(1-carboxyvinyl)-3-phosphoshikimate + phosphate. The protein operates within metabolic intermediate biosynthesis; chorismate biosynthesis; chorismate from D-erythrose 4-phosphate and phosphoenolpyruvate: step 6/7. In terms of biological role, catalyzes the transfer of the enolpyruvyl moiety of phosphoenolpyruvate (PEP) to the 5-hydroxyl of shikimate-3-phosphate (S3P) to produce enolpyruvyl shikimate-3-phosphate and inorganic phosphate. The sequence is that of 3-phosphoshikimate 1-carboxyvinyltransferase from Campylobacter jejuni subsp. jejuni serotype O:23/36 (strain 81-176).